The primary structure comprises 207 residues: Guanylate kinase (207 aa).

The Guanylate kinase-like domain maps to 4–184; it reads GTLYIVSAPS…ALLDLKTIIR (181 aa). 11 to 18 provides a ligand contact to ATP; the sequence is APSGAGKS.

The protein belongs to the guanylate kinase family.

The protein resides in the cytoplasm. The enzyme catalyses GMP + ATP = GDP + ADP. In terms of biological role, essential for recycling GMP and indirectly, cGMP. This chain is Guanylate kinase, found in Sodalis glossinidius (strain morsitans).